Consider the following 263-residue polypeptide: Indole-3-glycerol phosphate synthase (263 aa).

Belongs to the TrpC family.

The enzyme catalyses 1-(2-carboxyphenylamino)-1-deoxy-D-ribulose 5-phosphate + H(+) = (1S,2R)-1-C-(indol-3-yl)glycerol 3-phosphate + CO2 + H2O. Its pathway is amino-acid biosynthesis; L-tryptophan biosynthesis; L-tryptophan from chorismate: step 4/5. The sequence is that of Indole-3-glycerol phosphate synthase from Rhodospirillum rubrum (strain ATCC 11170 / ATH 1.1.1 / DSM 467 / LMG 4362 / NCIMB 8255 / S1).